Consider the following 226-residue polypeptide: PKHD-type hydroxylase BP3529 (226 aa).

The Fe2OG dioxygenase domain occupies Lys78–Ser178. 3 residues coordinate Fe cation: His96, Asp98, and His159. Arg169 serves as a coordination point for 2-oxoglutarate.

Requires Fe(2+) as cofactor. L-ascorbate serves as cofactor.

This Bordetella pertussis (strain Tohama I / ATCC BAA-589 / NCTC 13251) protein is PKHD-type hydroxylase BP3529.